The following is a 233-amino-acid chain: Leucyl/phenylalanyl-tRNA--protein transferase (233 aa).

It belongs to the L/F-transferase family.

The protein localises to the cytoplasm. It catalyses the reaction N-terminal L-lysyl-[protein] + L-leucyl-tRNA(Leu) = N-terminal L-leucyl-L-lysyl-[protein] + tRNA(Leu) + H(+). It carries out the reaction N-terminal L-arginyl-[protein] + L-leucyl-tRNA(Leu) = N-terminal L-leucyl-L-arginyl-[protein] + tRNA(Leu) + H(+). The enzyme catalyses L-phenylalanyl-tRNA(Phe) + an N-terminal L-alpha-aminoacyl-[protein] = an N-terminal L-phenylalanyl-L-alpha-aminoacyl-[protein] + tRNA(Phe). Functions in the N-end rule pathway of protein degradation where it conjugates Leu, Phe and, less efficiently, Met from aminoacyl-tRNAs to the N-termini of proteins containing an N-terminal arginine or lysine. The sequence is that of Leucyl/phenylalanyl-tRNA--protein transferase from Anaeromyxobacter dehalogenans (strain 2CP-C).